The chain runs to 794 residues: PAN2-PAN3 deadenylation complex subunit PAN3 (794 aa).

Residues 7–36 (SAKDVLCKNILIYGYCKFQDKGCAFSHNKQ) form a C3H1-type zinc finger. Disordered stretches follow at residues 40 to 97 (PQQQ…TQSK) and 187 to 226 (AQVG…QQQL). Composition is skewed to polar residues over residues 83-94 (IQSNGMVNSQET) and 189-199 (VGNNPGSTAPA). Low complexity predominate over residues 200 to 226 (NLQLQQKQPQQPQQPQQPQQHQQQQQL). The segment at 372-668 (QTMQHLSLPD…MDQFILQYIS (297 aa)) is pseudokinase domain. Residues Arg425 and 494-501 (DYYPNLTT) contribute to the ATP site. The stretch at 669–707 (SHFMTLMNKLQNSHDWVELQLSTELENARLFRLMTKINF) forms a coiled coil. Residues 708-794 (IISEMPTYDL…IDTQFRLLRG (87 aa)) form a knob domain region.

This sequence belongs to the protein kinase superfamily. PAN3 family. As to quaternary structure, homodimer. Forms a heterotrimer with a catalytic subunit PAN2 to form the poly(A)-nuclease (PAN) deadenylation complex. Interacts (via PAM-2 motif) with poly(A)-binding protein PAB1 (via PABC domain), conferring substrate specificity of the enzyme complex.

It localises to the cytoplasm. Regulatory subunit of the poly(A)-nuclease (PAN) deadenylation complex, one of two cytoplasmic mRNA deadenylases involved in mRNA turnover. PAN specifically shortens poly(A) tails of RNA and the activity is stimulated by poly(A)-binding protein PAB1. PAN deadenylation is followed by rapid degradation of the shortened mRNA tails by the CCR4-NOT complex. Deadenylated mRNAs are then degraded by two alternative mechanisms, namely exosome-mediated 3'-5' exonucleolytic degradation, or deadenylation-dependent mRNA decaping and subsequent 5'-3' exonucleolytic degradation by XRN1. May also be involved in post-transcriptional maturation of mRNA poly(A) tails. PAN3 acts as a positive regulator for PAN activity, recruiting the catalytic subunit PAN2 to mRNA via its interaction with RNA and with PAB1. The chain is PAN2-PAN3 deadenylation complex subunit PAN3 from Lodderomyces elongisporus (strain ATCC 11503 / CBS 2605 / JCM 1781 / NBRC 1676 / NRRL YB-4239) (Yeast).